Reading from the N-terminus, the 238-residue chain is Monocyte to macrophage differentiation factor (238 aa).

Residues Met-1–His-28 lie on the Cytoplasmic side of the membrane. The helical transmembrane segment at Ala-29 to Leu-49 threads the bilayer. Topologically, residues His-50–Thr-61 are lumenal. The helical transmembrane segment at Ala-62–Val-82 threads the bilayer. At Ser-83 to Arg-101 the chain is on the cytoplasmic side. Residues Met-102 to Gly-122 form a helical membrane-spanning segment. Topologically, residues Pro-123–Leu-124 are lumenal. A helical membrane pass occupies residues Ala-125 to Leu-145. The Cytoplasmic segment spans residues Tyr-146 to Lys-151. Residues Val-152–Met-172 traverse the membrane as a helical segment. At Asn-173 to Asn-174 the chain is on the lumenal side. A helical transmembrane segment spans residues Thr-175 to Phe-195. Residues Lys-196 to Asp-198 are Cytoplasmic-facing. Residues Gly-199–His-219 traverse the membrane as a helical segment. The Lumenal portion of the chain corresponds to Tyr-220–Leu-238.

Belongs to the ADIPOR family. Exhibits relatively ubiquitous expression with preferential expression in mature (in vitro differentiated) macrophages.

Its subcellular location is the late endosome membrane. It localises to the lysosome membrane. Its function is as follows. Involved in the dynamics of lysosomal membranes associated with microglial activation following brain lesion. This is Monocyte to macrophage differentiation factor from Homo sapiens (Human).